The chain runs to 93 residues: DNA-directed RNA polymerase subunit omega (93 aa).

The protein belongs to the RNA polymerase subunit omega family. In terms of assembly, the RNAP catalytic core consists of 2 alpha, 1 beta, 1 beta' and 1 omega subunit. When a sigma factor is associated with the core the holoenzyme is formed, which can initiate transcription.

The enzyme catalyses RNA(n) + a ribonucleoside 5'-triphosphate = RNA(n+1) + diphosphate. In terms of biological role, promotes RNA polymerase assembly. Latches the N- and C-terminal regions of the beta' subunit thereby facilitating its interaction with the beta and alpha subunits. This Corynebacterium urealyticum (strain ATCC 43042 / DSM 7109) protein is DNA-directed RNA polymerase subunit omega.